The sequence spans 87 residues: Small ribosomal subunit protein uS15c (87 aa).

This sequence belongs to the universal ribosomal protein uS15 family. Part of the 30S ribosomal subunit.

The protein localises to the plastid. The protein resides in the chloroplast. This is Small ribosomal subunit protein uS15c (rps15) from Oenothera argillicola (Appalachian evening primrose).